A 509-amino-acid chain; its full sequence is Probable cytochrome P450 6a14 (509 aa).

Cysteine 454 provides a ligand contact to heme.

It belongs to the cytochrome P450 family. Heme is required as a cofactor.

The protein localises to the endoplasmic reticulum membrane. It localises to the microsome membrane. In terms of biological role, may be involved in the metabolism of insect hormones and in the breakdown of synthetic insecticides. This Drosophila melanogaster (Fruit fly) protein is Probable cytochrome P450 6a14 (Cyp6a14).